The chain runs to 204 residues: Glycerol-3-phosphate acyltransferase (204 aa).

The next 4 helical transmembrane spans lie at 8 to 28, 76 to 96, 122 to 142, and 166 to 186; these read NAQF…LLLA, GVLV…LWGI, MGVM…VWAL, and FILH…VLLY.

Belongs to the PlsY family. As to quaternary structure, probably interacts with PlsX.

It localises to the cell inner membrane. It carries out the reaction an acyl phosphate + sn-glycerol 3-phosphate = a 1-acyl-sn-glycero-3-phosphate + phosphate. It functions in the pathway lipid metabolism; phospholipid metabolism. Functionally, catalyzes the transfer of an acyl group from acyl-phosphate (acyl-PO(4)) to glycerol-3-phosphate (G3P) to form lysophosphatidic acid (LPA). This enzyme utilizes acyl-phosphate as fatty acyl donor, but not acyl-CoA or acyl-ACP. The polypeptide is Glycerol-3-phosphate acyltransferase (Sulfurimonas denitrificans (strain ATCC 33889 / DSM 1251) (Thiomicrospira denitrificans (strain ATCC 33889 / DSM 1251))).